A 113-amino-acid chain; its full sequence is Large ribosomal subunit protein bL17 (113 aa).

Belongs to the bacterial ribosomal protein bL17 family. Part of the 50S ribosomal subunit. Contacts protein L32.

The chain is Large ribosomal subunit protein bL17 from Natranaerobius thermophilus (strain ATCC BAA-1301 / DSM 18059 / JW/NM-WN-LF).